The following is a 102-amino-acid chain: MTGSDLIGMMILAAGLFAIGLFGVLARRGILFQLVALEVALSGPALAFVAAGAYHADPQGQGMLILVLTLAAAEVAVGLALLLRIRRTAGSDDSDVISGMKG.

3 consecutive transmembrane segments (helical) span residues 6–26 (LIGMMILAAGLFAIGLFGVLA), 30–50 (ILFQLVALEVALSGPALAFVA), and 63–83 (MLILVLTLAAAEVAVGLALLL).

It belongs to the complex I subunit 4L family. NDH-1 is composed of 14 different subunits. Subunits NuoA, H, J, K, L, M, N constitute the membrane sector of the complex.

The protein localises to the cell inner membrane. The catalysed reaction is a quinone + NADH + 5 H(+)(in) = a quinol + NAD(+) + 4 H(+)(out). Functionally, NDH-1 shuttles electrons from NADH, via FMN and iron-sulfur (Fe-S) centers, to quinones in the respiratory chain. The immediate electron acceptor for the enzyme in this species is believed to be ubiquinone. Couples the redox reaction to proton translocation (for every two electrons transferred, four hydrogen ions are translocated across the cytoplasmic membrane), and thus conserves the redox energy in a proton gradient. The polypeptide is NADH-quinone oxidoreductase subunit K (Rhodopseudomonas palustris (strain HaA2)).